The following is a 381-amino-acid chain: Sensor histidine kinase FlgS (381 aa).

Residues 177-381 (HLAHEIRNPV…TFEIKILNAS (205 aa)) enclose the Histidine kinase domain. His180 is subject to Phosphohistidine; by autocatalysis.

Interacts (via its C-terminal kinase domain) with FlhA (via N-terminus). In terms of processing, autophosphorylated.

The enzyme catalyses ATP + protein L-histidine = ADP + protein N-phospho-L-histidine.. Member of the two-component regulatory system FlgR/FlgS that induces the transcriptional induction of the genes needed in motility and flagellar biogenesis. Also plays an essential role in bacterial survival at pH 2.5 independently of FlgR. Functions as a sensor protein kinase which is autophosphorylated at a histidine residue and transfers its phosphate group to the conserved aspartic acid residue in the regulatory domain of FlgR. In turn, FlgR functions as a transcriptional regulator initiating transcription from RpoN-dependent promoters. This is Sensor histidine kinase FlgS (flgS) from Helicobacter pylori (strain ATCC 700392 / 26695) (Campylobacter pylori).